Consider the following 23-residue polypeptide: Caerulein precursor fragment BM2 (23 aa).

Expressed by the skin glands.

Its subcellular location is the secreted. In terms of biological role, antimicrobial peptide. The sequence is that of Caerulein precursor fragment BM2 from Xenopus boumbaensis (Mawa clawed frog).